A 666-amino-acid chain; its full sequence is Nuclear distribution protein nudE homolog 1 (666 aa).

A coiled-coil region spans residues 14 to 195; sequence EEEIAHYREK…KDQLARAIAT (182 aa). Disordered regions lie at residues 40 to 64, 220 to 310, 369 to 388, and 397 to 666; these read EFQQ…KQQA, DDIN…SGIP, KRVT…PAPH, and DHNT…KVKK. Over residues 251–274 the composition is skewed to polar residues; that stretch reads RSGTMSSIPVASPSTKRFSQQIPH. Low complexity-rich tracts occupy residues 275–287 and 372–383; these read SPSF…STTS and TSTTSTTSSTTT. A compositionally biased stretch (polar residues) spans 400-410; the sequence is TTPTAQSQQFP. 3 stretches are compositionally biased toward low complexity: residues 449 to 465, 473 to 485, and 536 to 554; these read PTFR…LPSR, ASGS…SGTA, and SATP…STSN. 2 stretches are compositionally biased toward polar residues: residues 587-599 and 614-638; these read RQSL…TPTT and SSLS…SGRP.

The protein belongs to the nudE family. As to quaternary structure, self-associates. Interacts with PAC1.

It is found in the cytoplasm. Its subcellular location is the cytoskeleton. In terms of biological role, required for nuclear migration. The protein is Nuclear distribution protein nudE homolog 1 (NDE1) of Cryptococcus neoformans var. neoformans serotype D (strain B-3501A) (Filobasidiella neoformans).